A 428-amino-acid chain; its full sequence is Immunoglobulin superfamily containing leucine-rich repeat protein (428 aa).

The first 18 residues, 1 to 18, serve as a signal peptide directing secretion; it reads MRALCLLCWAVLLNLVRA. An LRRNT domain is found at 19–50; it reads CPEPCDCGEKYGFQIADCAYRDLEGVPPGFPA. N-linked (GlcNAc...) asparagine glycosylation occurs at asparagine 51. LRR repeat units lie at residues 51–72, 75–98, 99–122, 123–144, and 147–168; these read NVTT…AFRE, LLQS…APLS, HLKS…HNLS, ALQL…AFSS, and ALRS…TFAP. Residues 180-231 enclose the LRRCT domain; the sequence is NPFDCTCGIVWFKTWALASAVSIPEQDNIACTTPHVLKGIPLGRLPPLPCSA. Residues 232-343 enclose the Ig-like domain; it reads PSVQLSYQPS…GSAESSVNVA (112 aa). The cysteines at positions 257 and 327 are disulfide-linked. Residue asparagine 309 is glycosylated (N-linked (GlcNAc...) asparagine).

As to expression, detected in thyroid, heart, retina and spinal cord.

The protein localises to the secreted. In Mus musculus (Mouse), this protein is Immunoglobulin superfamily containing leucine-rich repeat protein (Islr).